The chain runs to 116 residues: uncharacterized protein (116 aa).

2 helical membrane passes run 40–60 (AIVK…IGIL) and 72–92 (FLGS…VVPI).

Its subcellular location is the membrane. This is an uncharacterized protein from Saccharomyces cerevisiae (strain ATCC 204508 / S288c) (Baker's yeast).